The following is a 337-amino-acid chain: Cysteine synthase 3 (337 aa).

K47 is subject to N6-(pyridoxal phosphate)lysine. Pyridoxal 5'-phosphate is bound by residues N78, G182–T186, and S270.

It belongs to the cysteine synthase/cystathionine beta-synthase family. Homodimer. The cofactor is pyridoxal 5'-phosphate.

The catalysed reaction is O-acetyl-L-serine + hydrogen sulfide = L-cysteine + acetate. The protein operates within amino-acid biosynthesis; L-cysteine biosynthesis; L-cysteine from L-serine: step 2/2. In terms of biological role, primarily catalyzes the formation of cysteine and acetate from O-acetylserine and hydrogen sulfide. Can also catalyze the formation of cysteine and acetate from S-sulfocysteine and hydrogen sulfide and the formation of cyanoalanine and hydrogen sulfide from either S-sulfocysteine or O-acetylserine and hydrogen cyanide. The sequence is that of Cysteine synthase 3 from Caenorhabditis elegans.